An 890-amino-acid chain; its full sequence is Calcium-transporting ATPase (890 aa).

At 1–47 (MKFHEMGQTDLLEATNTSMKQGLTEKEVKKRLDKHGPNELQEGKKTS) the chain is on the cytoplasmic side. The helical transmembrane segment at 48–68 (ALLLFFAQFKDFMVLVLLAAT) threads the bilayer. Topologically, residues 69-78 (LISGFLGEYV) are extracellular. Residues 79-99 (DAVAIIAIVFVNGILGFFQER) traverse the membrane as a helical segment. Over 100 to 238 (RAEQSLQALK…TLSTPLQRRL (139 aa)) the chain is Cytoplasmic. A helical membrane pass occupies residues 239–258 (EQLGKILIVVALLLTVLVVA). Residues 259–270 (VGVIQGHDLYSM) lie on the Extracellular side of the membrane. The helical transmembrane segment at 271-288 (FLAGVSLAVAAIPEGLPA) threads the bilayer. Val279, Ala280, Ile282, and Glu284 together coordinate Ca(2+). Residues 289 to 688 (IVTVALSLGV…KEGRNIYENI (400 aa)) are Cytoplasmic-facing. Catalysis depends on Asp326, which acts as the 4-aspartylphosphate intermediate. Residues Asp633 and Asp637 each contribute to the Mg(2+) site. Residues 689–708 (RKFIRYLLASNVGEILVMLF) form a helical membrane-spanning segment. Residues Asn699 and Glu702 each coordinate Ca(2+). The Extracellular portion of the chain corresponds to 709–718 (AMLLALPLPL). A helical membrane pass occupies residues 719–739 (VPIQILWVNLVTDGLPAMALG). The Ca(2+) site is built by Asn727, Thr730, and Asp731. Topologically, residues 740–759 (MDQPEGDVMKRKPRHPKEGV) are cytoplasmic. The helical transmembrane segment at 760–782 (FARKLGWKVVSRGFLIGVATILA) threads the bilayer. The Extracellular portion of the chain corresponds to 783–798 (FIIVYHRNPENLAYAQ). A helical transmembrane segment spans residues 799-818 (TIAFATLVLAQLIHVFDCRS). Topologically, residues 819–830 (ETSVFSRNPFQN) are cytoplasmic. The chain crosses the membrane as a helical span at residues 831–849 (LYLIGAVLSSILLMLVVIY). Over 850–864 (YPPLQPIFHTVAITP) the chain is Extracellular. A helical membrane pass occupies residues 865 to 885 (GDWMLVIGMSAIPTFLLAGSL). The Cytoplasmic portion of the chain corresponds to 886–890 (LTRKK).

The protein belongs to the cation transport ATPase (P-type) (TC 3.A.3) family. Type IIA subfamily. Phosphorylated in a Ca(2+)-dependent manner starting 4 hours after shifting to sporulation medium.

Its subcellular location is the cell membrane. It catalyses the reaction Ca(2+)(in) + ATP + H2O = Ca(2+)(out) + ADP + phosphate + H(+). Functionally, this magnesium-dependent enzyme catalyzes the hydrolysis of ATP coupled with the transport of calcium. This chain is Calcium-transporting ATPase (yloB), found in Bacillus subtilis (strain 168).